The following is a 1483-amino-acid chain: Heme-responsive zinc finger transcription factor HAP1 (1483 aa).

Over residues 1-50 (MSNTPYNSSVPSIASMTQSSVSRSPNMHTATTPGANTSSNSPPLHMSSDS) the composition is skewed to polar residues. Residues 1 to 56 (MSNTPYNSSVPSIASMTQSSVSRSPNMHTATTPGANTSSNSPPLHMSSDSSKIKRK) are disordered. Residues Cys64, Cys67, Cys74, Cys81, Cys84, and Cys93 each contribute to the Zn(2+) site. The zn(2)-C6 fungal-type DNA-binding region spans 64–93 (CTICRKRKVKCDKLRPHCQQCTKTGVAHLC). Residues 105–134 (EKELLKDNELKKLRERVKSLEKTLSKVHSS) are a coiled coil. The tract at residues 126 to 208 (KTLSKVHSSP…ANSSSLSISN (83 aa)) is disordered. The span at 130 to 142 (KVHSSPSSNSLKS) shows a compositional bias: low complexity. Polar residues-rich tracts occupy residues 143–152 (YNTPESSNLF) and 160–176 (TLVN…SHMH). The segment covering 177-208 (QQQQQQQQQEQQQDFSRSANANANSSSLSISN) has biased composition (low complexity). The tract at residues 244–444 (KGDPYLKLLW…NTIPHHQPQS (201 aa)) is heme-responsive; required for HMC formation. HRM repeat units lie at residues 280–285 (KCPINH), 299–304 (KCPVDH), 323–328 (KCPVDH), 347–352 (RCPVDH), 389–394 (KCPVDH), and 415–420 (RCPIDH). Composition is skewed to polar residues over residues 432–447 (STHN…SGSH) and 706–734 (QLNA…NPTL). Disordered stretches follow at residues 432 to 458 (STHN…SRKH) and 706 to 767 (QLNA…KENQ). Over residues 735–759 (NNNMSAATTNSSSRSGSADSRSGSN) the composition is skewed to low complexity. One copy of the HRM 7 repeat lies at 1192–1197 (KCPVYQ). The interval 1384–1411 (TANTDTSANGSALSTLTSPQGSDLASNS) is disordered. Polar residues predominate over residues 1388 to 1411 (DTSANGSALSTLTSPQGSDLASNS).

In terms of assembly, binds DNA as a homodimer. Interacts with SRO9 and YDJ1. In the absence of heme, binds to at least four cellular proteins, including YDJ1 and SRO9, forming a high-molecular-weight complex (HMC) which results in repression of its activity and dictates its DNA-binding specificity.

The protein resides in the nucleus. In terms of biological role, regulation of oxygen dependent gene expression. It modulates the expression of Iso-1 (CYP1) and Iso-2 (CYP3) cytochrome c. In response to heme, promotes transcription of genes encoding functions required for respiration, controlling oxidative damage and repression of anaerobic genes. Binds to the sequence 5'-CGGNNNTNNCGG-3'. Is non-functional in terms of iso-1 cytochrome c expression in strain S288c and its derivatives. The sequence is that of Heme-responsive zinc finger transcription factor HAP1 (HAP1) from Saccharomyces cerevisiae (Baker's yeast).